A 141-amino-acid chain; its full sequence is Nucleoside diphosphate kinase (141 aa).

Residues lysine 11, phenylalanine 59, arginine 87, threonine 93, arginine 104, and asparagine 114 each contribute to the ATP site. Residue histidine 117 is the Pros-phosphohistidine intermediate of the active site.

It belongs to the NDK family. Homotetramer. The cofactor is Mg(2+).

It is found in the cytoplasm. The enzyme catalyses a 2'-deoxyribonucleoside 5'-diphosphate + ATP = a 2'-deoxyribonucleoside 5'-triphosphate + ADP. It carries out the reaction a ribonucleoside 5'-diphosphate + ATP = a ribonucleoside 5'-triphosphate + ADP. Functionally, major role in the synthesis of nucleoside triphosphates other than ATP. The ATP gamma phosphate is transferred to the NDP beta phosphate via a ping-pong mechanism, using a phosphorylated active-site intermediate. The chain is Nucleoside diphosphate kinase from Paraburkholderia xenovorans (strain LB400).